We begin with the raw amino-acid sequence, 229 residues long: Cytidylate kinase (229 aa).

ATP is bound at residue 12–20 (GPSGSGKGT).

Belongs to the cytidylate kinase family. Type 1 subfamily.

The protein localises to the cytoplasm. It carries out the reaction CMP + ATP = CDP + ADP. It catalyses the reaction dCMP + ATP = dCDP + ADP. This Pseudomonas fluorescens (strain ATCC BAA-477 / NRRL B-23932 / Pf-5) protein is Cytidylate kinase.